We begin with the raw amino-acid sequence, 420 residues long: uncharacterized protein (420 aa).

The 173-residue stretch at 43–215 folds into the VWFA domain; that stretch reads NLCLVLDHSG…HTFRQLFQRM (173 aa). Residues 389–420 form a disordered region; it reads LQSGEDLSEGDRKKTRMVSKTTLQPPSAPSEH.

This is an uncharacterized protein from Synechocystis sp. (strain ATCC 27184 / PCC 6803 / Kazusa).